We begin with the raw amino-acid sequence, 604 residues long: UvrABC system protein C (604 aa).

The GIY-YIG domain maps to 15–92 (DLPGCYLMKN…IQKHQPYFNI (78 aa)). Residues 197 to 232 (ETVKKQLTKRMDQAAADLEFERAAELRDQLNYIEMT) form the UVR domain.

This sequence belongs to the UvrC family. In terms of assembly, interacts with UvrB in an incision complex.

It localises to the cytoplasm. In terms of biological role, the UvrABC repair system catalyzes the recognition and processing of DNA lesions. UvrC both incises the 5' and 3' sides of the lesion. The N-terminal half is responsible for the 3' incision and the C-terminal half is responsible for the 5' incision. The protein is UvrABC system protein C of Lactiplantibacillus plantarum (strain ATCC BAA-793 / NCIMB 8826 / WCFS1) (Lactobacillus plantarum).